The following is a 325-amino-acid chain: DNA-directed RNA polymerase subunit alpha (325 aa).

The segment at 1–238 (MSLKSLLKGF…EHLTVFINFE (238 aa)) is alpha N-terminal domain (alpha-NTD). The interval 255 to 325 (LKASLSKHVE…LGLSFGMRDF (71 aa)) is alpha C-terminal domain (alpha-CTD).

It belongs to the RNA polymerase alpha chain family. As to quaternary structure, homodimer. The RNAP catalytic core consists of 2 alpha, 1 beta, 1 beta' and 1 omega subunit. When a sigma factor is associated with the core the holoenzyme is formed, which can initiate transcription.

The enzyme catalyses RNA(n) + a ribonucleoside 5'-triphosphate = RNA(n+1) + diphosphate. Functionally, DNA-dependent RNA polymerase catalyzes the transcription of DNA into RNA using the four ribonucleoside triphosphates as substrates. The chain is DNA-directed RNA polymerase subunit alpha from Leptospira interrogans serogroup Icterohaemorrhagiae serovar copenhageni (strain Fiocruz L1-130).